The following is a 306-amino-acid chain: Diterpene cyclase eriG (306 aa).

2 consecutive transmembrane segments (helical) span residues 13-33 and 43-63; these read IFFG…SIFA and ATLV…IYFF. An N-linked (GlcNAc...) asparagine glycan is attached at asparagine 64. A run of 4 helical transmembrane segments spans residues 115 to 135, 161 to 181, 213 to 233, and 265 to 285; these read FLPE…TSYG, IAPA…WAGL, LIIT…AGIF, and MFYT…GLGL.

It belongs to the UbiA prenyltransferase family. Requires Mg(2+) as cofactor.

The protein localises to the membrane. The enzyme catalyses (2E,6E,10E)-geranylgeranyl diphosphate = (-)-cyatha-3,12-diene + diphosphate. It functions in the pathway secondary metabolite biosynthesis. EDTA completely blocks the reaction. Its function is as follows. Diterpene cyclase; part of the gene cluster that mediates the biosynthesis of erinacines, cyathane-xylosides that show unique biological activities, including leishmanicidal activity, stimulating activity for nerve growth-factor synthesis, and agonistic activity toward the kappa opioid receptor. Within the pathway, eriG acts as a diterpene cyclase that converts geranylgeranyl diphosphate (GGPP) into cyatha-3,12-diene. EriG is unable to use geranyl diphosphate (GPP) or farnesyl diphosphate (FPP) as substrates. The first step of the erinacines biosynthesis pathway is catalyzed by the geranylgeranyl diphosphate (GGPP) synthase eriE via conversion of farnesyl pyrophosphate and isopentyl pyrophosphate into geranylgeranyl pyrophosphate (GGPP). GGPP is then substrate of the diterpene cyclase eriG for the production of cyatha-3,12-diene. The cytochrome P450 monooxygenase eriI then hydroxylates cyatha-3,12-diene at C-14 of the seven-membered ring to produce erinacol, which is further hydroxylated at C-15 by the cytochrome P450 monooxygenase eriC to yield cyathadiol. The cytochrome P450 monooxygenase eriA then catalyzes C-11 hydroxylation in the presence of the short chain dehydrogenase/reductase (SDR) eriH, which leads to the production of cyathatriol. The acetyltransferase eriL converts cyathatriol into 11-O-acetyl-cyathatriol. The SDR eriH catalyzes further oxidation of 11-O-acetyl-cyathatriol into 1-O-acetylcyathin A3. Finally, the glycosyl transferase eriJ tranfers xylose from UDP-xylose onto C-14 of 11-O-acetyl-cyathatriol to form eracine Q. EriJ is also able to convert 11-O-acetyl-cyathatriol to eracine Q2 by using UDP-D-glucose as cosubstrate, but at a lower rate. This is Diterpene cyclase eriG from Hericium erinaceus (Lion's mane mushroom).